A 412-amino-acid polypeptide reads, in one-letter code: Argininosuccinate synthase (412 aa).

Residues 10 to 18 (AYSGGLDTS) and Ala-36 each bind ATP. L-citrulline-binding residues include Tyr-87 and Ser-92. 115–123 (SHGATGKGN) is an ATP binding site. L-aspartate contacts are provided by Thr-119, Asn-123, and Asp-124. An L-citrulline-binding site is contributed by Asn-123. L-citrulline-binding residues include Arg-127, Ser-180, Ser-189, Glu-270, and Tyr-282.

It belongs to the argininosuccinate synthase family. As to quaternary structure, homotetramer.

The catalysed reaction is L-citrulline + L-aspartate + ATP = 2-(N(omega)-L-arginino)succinate + AMP + diphosphate + H(+). Its pathway is amino-acid biosynthesis; L-arginine biosynthesis; L-arginine from L-ornithine and carbamoyl phosphate: step 2/3. The protein operates within nitrogen metabolism; urea cycle; (N(omega)-L-arginino)succinate from L-aspartate and L-citrulline: step 1/1. This is Argininosuccinate synthase from Aedes aegypti (Yellowfever mosquito).